The following is a 398-amino-acid chain: E3 ubiquitin-protein ligase RSL1 (398 aa).

Residues 155–374 (QKETCNICLN…LDLTQCCGSC (220 aa)) are TRIAD supradomain. Zn(2+)-binding residues include Cys-159, Cys-162, Cys-183, Cys-186, Cys-246, Cys-251, Cys-271, Cys-274, Cys-279, Cys-282, His-287, Cys-292, Cys-321, and Cys-324. The RING-type 3; degenerate zinc-finger motif lies at 159-207 (CNICLNDDINADQMFSVDKSGHMCCSECVKRHIEVRLLEGSLITCPHYR). The segment at 159 to 208 (CNICLNDDINADQMFSVDKSGHMCCSECVKRHIEVRLLEGSLITCPHYRC) adopts an RING-type 1 zinc-finger fold. The IBR-type zinc finger occupies 233–292 (TKDELIPVMDRVYCPNPRCSTLMSETELSGLNIGVRRCCVKCGEPFCVKCKVSWHNNLSC). The segment at 321–349 (CSKCKHMIELSSGCISVVCRCGHTFCYQC) adopts an RING-type 2; atypical zinc-finger fold. An RING-type 4; degenerate zinc finger spans residues 321-356 (CSKCKHMIELSSGCISVVCRCGHTFCYQCGADAGDC). Residue Cys-334 is part of the active site. 6 residues coordinate Zn(2+): Cys-339, Cys-341, Cys-346, Cys-349, His-358, and Cys-370. Residues 374-394 (CCCFVFFLVIIAIVVTIILLV) form a helical membrane-spanning segment.

The protein belongs to the RBR family. In terms of assembly, interacts with the PYL4 and PYR1 ABA receptors at the plasma membrane. Zn(2+) is required as a cofactor.

The protein resides in the cell membrane. The protein localises to the vacuole membrane. The catalysed reaction is [E2 ubiquitin-conjugating enzyme]-S-ubiquitinyl-L-cysteine + [acceptor protein]-L-lysine = [E2 ubiquitin-conjugating enzyme]-L-cysteine + [acceptor protein]-N(6)-ubiquitinyl-L-lysine.. It participates in protein modification; protein ubiquitination. Functionally, acts as an E3 ubiquitin-protein ligase, or as part of E3 complex, which accepts ubiquitin from specific E2 ubiquitin-conjugating enzymes and then transfers it to substrates. Negative regulator of the abscisic acid (ABA) signaling pathway which targets PYL4 and PYR1 ABA receptors in plasma membrane to promote their FREE1/FYVE1-dependent trafficking and degradation upon ubiquitynation; this process involves clathrin-mediated endocytosis and trafficking through the ESCRT pathway. Involved in the maintenance of seed longevity. May enhance gibberellins responses. The polypeptide is E3 ubiquitin-protein ligase RSL1 (Arabidopsis thaliana (Mouse-ear cress)).